The sequence spans 404 residues: uncharacterized protein (404 aa).

The next 12 membrane-spanning stretches (helical) occupy residues 16-36, 49-69, 79-99, 110-130, 133-153, 166-186, 221-241, 252-272, 283-303, 307-327, 342-362, and 364-384; these read FAFF…QPLM, AASL…LVFG, PIMG…AFSP, IQGV…GEEI, GSLG…AVFG, WHMA…IFFI, FLIG…IVYV, AFSS…SFIG, ILVM…NNML, ILGI…ASSW, LYLF…GLFW, and GFHW…ALWL.

This sequence belongs to the major facilitator superfamily.

Its subcellular location is the cell membrane. This is an uncharacterized protein from Bacillus subtilis (strain 168).